We begin with the raw amino-acid sequence, 242 residues long: Dehydration-responsive element-binding protein 1J (242 aa).

Residues 20 to 29 are compositionally biased toward low complexity; sequence SSATTAATAT. The interval 20-44 is disordered; the sequence is SSATTAATATGPASPKRPAGRTKFQ. Positions 50–109 form a DNA-binding region, AP2/ERF; sequence VFRGVRRRGRAGRWVCEVRVPGSRGDRLWVGTFDTAEEAARAHDAAMLAMCGASASLNFT. A disordered region spans residues 143-184; sequence FQRRGSTAATATATSGDAASTAPPSSSPVLSPNDDNASSAST. The span at 148-184 shows a compositional bias: low complexity; sequence STAATATATSGDAASTAPPSSSPVLSPNDDNASSAST.

It belongs to the AP2/ERF transcription factor family. ERF subfamily.

It is found in the nucleus. Its function is as follows. Transcriptional activator that binds specifically to the DNA sequence 5'-[AG]CCGAC-3'. Binding to the C-repeat/DRE element mediates high salinity- and dehydration-inducible transcription. The polypeptide is Dehydration-responsive element-binding protein 1J (DREB1J) (Oryza sativa subsp. indica (Rice)).